The following is a 124-amino-acid chain: Large ribosomal subunit protein uL29 (124 aa).

It belongs to the universal ribosomal protein uL29 family.

This chain is Large ribosomal subunit protein uL29 (RPL35), found in Tetrahymena thermophila (strain SB210).